The primary structure comprises 138 residues: Phosphoribosyl-AMP cyclohydrolase (138 aa).

Mg(2+) is bound at residue aspartate 84. Cysteine 85 contacts Zn(2+). Residues aspartate 86 and aspartate 88 each coordinate Mg(2+). Residues cysteine 102 and cysteine 109 each coordinate Zn(2+).

This sequence belongs to the PRA-CH family. Homodimer. It depends on Mg(2+) as a cofactor. Requires Zn(2+) as cofactor.

The protein localises to the cytoplasm. The enzyme catalyses 1-(5-phospho-beta-D-ribosyl)-5'-AMP + H2O = 1-(5-phospho-beta-D-ribosyl)-5-[(5-phospho-beta-D-ribosylamino)methylideneamino]imidazole-4-carboxamide. The protein operates within amino-acid biosynthesis; L-histidine biosynthesis; L-histidine from 5-phospho-alpha-D-ribose 1-diphosphate: step 3/9. Catalyzes the hydrolysis of the adenine ring of phosphoribosyl-AMP. The chain is Phosphoribosyl-AMP cyclohydrolase from Burkholderia pseudomallei (strain K96243).